Reading from the N-terminus, the 141-residue chain is Putative pre-16S rRNA nuclease (141 aa).

The protein belongs to the YqgF nuclease family.

It is found in the cytoplasm. In terms of biological role, could be a nuclease involved in processing of the 5'-end of pre-16S rRNA. In Aliivibrio salmonicida (strain LFI1238) (Vibrio salmonicida (strain LFI1238)), this protein is Putative pre-16S rRNA nuclease.